A 690-amino-acid chain; its full sequence is Copper-exporting P-type ATPase B (690 aa).

The Cytoplasmic segment spans residues 1–64 (MHEHDSHGEA…MEDFKKRFYV (64 aa)). Positions 23–46 (QHHEHHGHEEEHSAHHEKMKHSAD) are disordered. Residues 28–46 (HGHEEEHSAHHEKMKHSAD) are compositionally biased toward basic and acidic residues. A helical membrane pass occupies residues 65 to 85 (STLLTIPILILSPAIQTFLGF). Over 86 to 91 (RVEFAG) the chain is Extracellular. Residues 92 to 112 (SLYILFLLSSAVYFYGGYPFL) form a helical membrane-spanning segment. At 113–127 (KGIFDELRRRQPGMM) the chain is on the cytoplasmic side. A helical membrane pass occupies residues 128–148 (TLIAVAISVAYFYSSAVVFGL). The Extracellular portion of the chain corresponds to 149-151 (KGK). Residues 152 to 172 (FFFWELATLIDIMLLGHYIEM) traverse the membrane as a helical segment. At 173 to 303 (RSVLGASRAL…KSRTQDLANR (131 aa)) the chain is on the cytoplasmic side. The helical transmembrane segment at 304–324 (AALLLTVIALTVGSVTLAIWL) threads the bilayer. At 325–336 (AYIADFAFAIER) the chain is on the extracellular side. The chain crosses the membrane as a helical span at residues 337-357 (AVTVMVITCPHALGLAIPLVV). The Cytoplasmic portion of the chain corresponds to 358–640 (AVSTSLAAKS…RKTYSKMKQN (283 aa)). The 4-aspartylphosphate intermediate role is filled by D389. Phosphate-binding positions include 390 to 391 (KT), 537 to 538 (TG), and K565. Mg(2+) is bound by residues D583 and D587. Residues 641-661 (LLWATGYNAFAIPLAAGVLYS) form a helical membrane-spanning segment. Over 662-663 (AG) the chain is Extracellular. Residues 664–684 (ILLSPAVGAILMSLSTVIVAI) form a helical membrane-spanning segment. The Cytoplasmic portion of the chain corresponds to 685–690 (NARLLR).

It belongs to the cation transport ATPase (P-type) (TC 3.A.3) family. Type IB subfamily.

It localises to the cell membrane. The catalysed reaction is Cu(2+)(in) + ATP + H2O = Cu(2+)(out) + ADP + phosphate + H(+). Its activity is regulated as follows. Activated by Cu(2+) and to a lesser extent by Ag(+) and Cu(+). Involved in copper export. The protein is Copper-exporting P-type ATPase B (copB) of Archaeoglobus fulgidus (strain ATCC 49558 / DSM 4304 / JCM 9628 / NBRC 100126 / VC-16).